Consider the following 678-residue polypeptide: DNA ligase (678 aa).

NAD(+) contacts are provided by residues D47 to D51, S96 to L97, and E122. Residue K124 is the N6-AMP-lysine intermediate of the active site. Residues R145, E182, K300, and K324 each contribute to the NAD(+) site. Positions 418, 421, 436, and 442 each coordinate Zn(2+). One can recognise a BRCT domain in the interval A602 to L678.

The protein belongs to the NAD-dependent DNA ligase family. LigA subfamily. Requires Mg(2+) as cofactor. Mn(2+) is required as a cofactor.

It carries out the reaction NAD(+) + (deoxyribonucleotide)n-3'-hydroxyl + 5'-phospho-(deoxyribonucleotide)m = (deoxyribonucleotide)n+m + AMP + beta-nicotinamide D-nucleotide.. In terms of biological role, DNA ligase that catalyzes the formation of phosphodiester linkages between 5'-phosphoryl and 3'-hydroxyl groups in double-stranded DNA using NAD as a coenzyme and as the energy source for the reaction. It is essential for DNA replication and repair of damaged DNA. The chain is DNA ligase from Francisella tularensis subsp. holarctica (strain OSU18).